A 305-amino-acid chain; its full sequence is Tyrosine recombinase XerC (305 aa).

One can recognise a Core-binding (CB) domain in the interval 1-84 (MNEVFESYLT…TLRGFYKYAL (84 aa)). A Tyr recombinase domain is found at 105–299 (KLPVFMFPKQ…TAEQLQNLYK (195 aa)). Active-site residues include Arg146, Lys170, His251, Arg254, and His277. Catalysis depends on Tyr286, which acts as the O-(3'-phospho-DNA)-tyrosine intermediate.

Belongs to the 'phage' integrase family. XerC subfamily. In terms of assembly, forms a cyclic heterotetrameric complex composed of two molecules of XerC and two molecules of XerD.

The protein resides in the cytoplasm. In terms of biological role, site-specific tyrosine recombinase, which acts by catalyzing the cutting and rejoining of the recombining DNA molecules. The XerC-XerD complex is essential to convert dimers of the bacterial chromosome into monomers to permit their segregation at cell division. It also contributes to the segregational stability of plasmids. This is Tyrosine recombinase XerC from Treponema denticola (strain ATCC 35405 / DSM 14222 / CIP 103919 / JCM 8153 / KCTC 15104).